A 168-amino-acid polypeptide reads, in one-letter code: Plastocyanin, chloroplastic (168 aa).

The region spanning 70–168 is the Plastocyanin-like domain; the sequence is VEVLLGGGDG…AGMVGKVTVN (99 aa). Positions 106, 153, 156, and 161 each coordinate Cu cation.

It belongs to the plastocyanin family. Requires Cu(2+) as cofactor.

It is found in the plastid. The protein resides in the chloroplast thylakoid membrane. Functionally, participates in electron transfer between P700 and the cytochrome b6-f complex in photosystem I. The chain is Plastocyanin, chloroplastic (PETE) from Spinacia oleracea (Spinach).